The following is a 48-amino-acid chain: Bacteriochlorophyll c-binding protein (48 aa).

H25 is an a bacteriochlorophyll c binding site.

The protein belongs to the BChl C/E-binding protein family.

It localises to the chlorosome. It is found in the chlorosome envelope. Its function is as follows. Component of the photosynthetic apparatus. The light harvesting B740 complex binds bacteriochlorophyll c. This Chlorobaculum thiosulfatiphilum (Chlorobium limicola f.sp. thiosulfatophilum) protein is Bacteriochlorophyll c-binding protein (csmA).